A 110-amino-acid polypeptide reads, in one-letter code: Iron-sulfur cluster assembly protein CyaY (110 aa).

It belongs to the frataxin family.

Its function is as follows. Involved in iron-sulfur (Fe-S) cluster assembly. May act as a regulator of Fe-S biogenesis. The chain is Iron-sulfur cluster assembly protein CyaY from Pseudomonas syringae pv. syringae (strain B728a).